Here is a 446-residue protein sequence, read N- to C-terminus: MATILQHLPTGQKVGIAFSGGLDTSAALHWMKLKGALPYAYTAHLGQPDEPDYDEIPRKAMQYGAEKARLIDCRAQLVAEGLAALQAGAFHISTAGVTYFNTTPIGRAVTGTMLVAAMKEDDVHIWGDGSTFKGNDIERFYRYGLLTNPALKIYKPWLDQTFIDELGGRAEMSAFMTQAGFGYKMSAEKAYSTDSNLLGATHEAKDLEHLSSGIRIVNPIMGVAFWRDEVEVKREEVTVRFEEGRPVALNGIEFADPVALLLEANRIGGRHGLGMSDQIENRIIEAKSRGIYEAPGLALLHIAYERLVTGIHNEDTIEQYRDNGRKLGRLLYQGRWFDPQAIMLRETAQRWVARAVTGEVALELRRGNDYSILDTRSPNLTYQPERLSMEKVEDAPFSPADRIGQLTMRNLDIVDTRAKLGIYAKSGLLSLGSGAALARLQNDDPS.

Residues 17-25 and A43 contribute to the ATP site; that span reads AFSGGLDTS. Residue Y99 coordinates L-citrulline. Residues G129 and T131 each coordinate ATP. 3 residues coordinate L-aspartate: T131, N135, and D136. An L-citrulline-binding site is contributed by N135. D136 contributes to the ATP binding site. 2 residues coordinate L-citrulline: R139 and S192. D194 serves as a coordination point for ATP. Positions 201, 203, and 280 each coordinate L-citrulline.

This sequence belongs to the argininosuccinate synthase family. Type 2 subfamily. Homotetramer.

It localises to the cytoplasm. The enzyme catalyses L-citrulline + L-aspartate + ATP = 2-(N(omega)-L-arginino)succinate + AMP + diphosphate + H(+). It participates in amino-acid biosynthesis; L-arginine biosynthesis; L-arginine from L-ornithine and carbamoyl phosphate: step 2/3. The sequence is that of Argininosuccinate synthase from Methylibium petroleiphilum (strain ATCC BAA-1232 / LMG 22953 / PM1).